We begin with the raw amino-acid sequence, 148 residues long: Cystatin-C (148 aa).

Residues 1-30 form the signal peptide; it reads MVGSPRAPLLLLASLIVALALALAVSPAAA. Position 31 is a pyrrolidone carboxylic acid (Q31). Positions 84-88 match the Secondary area of contact motif; sequence QVVSG. Intrachain disulfides connect C102–C112 and C126–C146.

The protein localises to the secreted. This is a thiol proteinase inhibitor. The polypeptide is Cystatin-C (CST3) (Bos taurus (Bovine)).